The sequence spans 483 residues: Cysteine proteinase 1, mitochondrial (483 aa).

A mitochondrion-targeting transit peptide spans 1–30 (MLPTSVSRSLYLKTFRSHLLRAPQIVLKRM). Catalysis depends on residues Cys102, His398, and Asn421. A propeptide (removed in mature form; by autocatalysis) is located at residue Lys483.

The protein belongs to the peptidase C1 family. As to quaternary structure, homohexamer. Binds to nucleic acids. Binds single-stranded DNA and RNA with higher affinity than double-stranded DNA. Post-translationally, the N-terminus of isoform Cytoplasmic is blocked.

The protein localises to the mitochondrion. The protein resides in the cytoplasm. It carries out the reaction Inactivates bleomycin B2 (a cytotoxic glycometallopeptide) by hydrolysis of a carboxyamide bond of beta-aminoalanine, but also shows general aminopeptidase activity. The specificity varies somewhat with source, but amino acid arylamides of Met, Leu and Ala are preferred.. With respect to regulation, inhibited by E64, a specific inhibitor of cysteine proteases, N-ethylmaleimide, iodacetamide, and mercury and zinc ions. The normal physiological role of the enzyme is unknown, but it is not essential for the viability of yeast cells. Has aminopeptidase activity, shortening substrate peptides sequentially by 1 amino acid. Has bleomycin hydrolase activity, which can protect the cell from the toxic effects of bleomycin. Has homocysteine-thiolactonase activity, protecting the cell against homocysteine toxicity. Acts as a repressor in the GAL4 regulatory system, but this does not require either the peptidase or nucleic acid-binding activities. This Saccharomyces cerevisiae (strain AWRI1631) (Baker's yeast) protein is Cysteine proteinase 1, mitochondrial (LAP3).